We begin with the raw amino-acid sequence, 131 residues long: Large ribosomal subunit protein bL19 (131 aa).

A disordered region spans residues 107–131; that stretch reads GKSARIAERAERGSDKGKAAPAAAE. The segment covering 111 to 124 has biased composition (basic and acidic residues); the sequence is RIAERAERGSDKGK.

This sequence belongs to the bacterial ribosomal protein bL19 family.

Its function is as follows. This protein is located at the 30S-50S ribosomal subunit interface and may play a role in the structure and function of the aminoacyl-tRNA binding site. In Methylobacterium sp. (strain 4-46), this protein is Large ribosomal subunit protein bL19.